Here is a 119-residue protein sequence, read N- to C-terminus: Toxin ICK-9 (119 aa).

An N-terminal signal peptide occupies residues 1–19 (MMKLYSLVIIATLAAAAFA). Cystine bridges form between cysteine 59–cysteine 74, cysteine 67–cysteine 80, cysteine 71–cysteine 116, and cysteine 73–cysteine 87.

This sequence belongs to the neurotoxin 25 family. ICK-8 subfamily. Expressed by the venom gland.

It localises to the secreted. In terms of biological role, ion channel inhibitor. The polypeptide is Toxin ICK-9 (Trittame loki (Brush-footed trapdoor spider)).